A 396-amino-acid chain; its full sequence is 1-deoxy-D-xylulose 5-phosphate reductoisomerase (396 aa).

Positions 10, 11, 12, 13, and 123 each coordinate NADPH. Residue Lys-124 participates in 1-deoxy-D-xylulose 5-phosphate binding. An NADPH-binding site is contributed by Glu-125. Asp-149 lines the Mn(2+) pocket. 1-deoxy-D-xylulose 5-phosphate contacts are provided by Ser-150, Glu-151, Ser-185, and His-208. Glu-151 lines the Mn(2+) pocket. Gly-214 serves as a coordination point for NADPH. 4 residues coordinate 1-deoxy-D-xylulose 5-phosphate: Ser-221, Asn-226, Lys-227, and Glu-230. Glu-230 serves as a coordination point for Mn(2+).

It belongs to the DXR family. It depends on Mg(2+) as a cofactor. Requires Mn(2+) as cofactor.

It carries out the reaction 2-C-methyl-D-erythritol 4-phosphate + NADP(+) = 1-deoxy-D-xylulose 5-phosphate + NADPH + H(+). The protein operates within isoprenoid biosynthesis; isopentenyl diphosphate biosynthesis via DXP pathway; isopentenyl diphosphate from 1-deoxy-D-xylulose 5-phosphate: step 1/6. In terms of biological role, catalyzes the NADPH-dependent rearrangement and reduction of 1-deoxy-D-xylulose-5-phosphate (DXP) to 2-C-methyl-D-erythritol 4-phosphate (MEP). In Shewanella baltica (strain OS223), this protein is 1-deoxy-D-xylulose 5-phosphate reductoisomerase.